A 1411-amino-acid chain; its full sequence is MKDLLKLLKPTNQAEEFDGIRIALSSPDMIRSWSYGEVKKPETINYRTFKPERDGLFCARIFGPVKDYECLCGKYKRLKHRGVICEKCGVEVTLTKVRRERMGHIELASPVAHIWFLKSLPSRIGLMLDMTLRDIERVLYFESYVVTEGGLTSLEQGQILTEDEYLDALEEHGDEFDAKMGAEAVLDLLRAVDIDGDVQKLREELPETNSETKRKKISKRLKLLEAFQVSNNKPEWMILKVLPILPPDLRPLVPLDGGRFATSDLNDLYRRVINRNNRLKRLLDLAAPDIIVRNEKRMLQEAVDALLDNGRRGRAITGSNKRPLKSLADMIKGKQGRFRQNLLGKRVDYSGRSVITVGPKLRLHQCGLPKKMALELFKPFIYGKLERRGLATTIKAAKKMVERETAEVWDVLDEVIKEHPVLLNRAPTLHRLGIQAFEPVLIEGKAIQLHPLVCAAYNADFDGDQMAVHLPLTLEAQLEARALMMSTNNVLSPASGDPIIVPSQDVVLGLYYMTKEKINGKGEGMVFKDPNEAEKAYRTGQVELHSRVRVRITDTTIDDDGNRTTKTELRDTTCGRAILSLIMPEGLPFELINQAMGKKPIGRMLNKAYRDLGLKDTVVFADQIMYTGFHYAMVSGASVGINDMVIPEAKKEIVSAAEEEVAEIQEQFESGLVTAGEKYNKVIDIWSTANEKVSKAMMDNLSKEIVKNKDGEDEEQASFNSVFMMADSGARGSPAQIRQLAGMRGLMAKPDGSIIETPIVANFREGLNVLQYFISTHGARKGLADTALKTANSGYLTRRLVDVSQDVVIMEEDCGTYEGLYMKPLIEGGDVVEPLRERVLGRVLCEPVMKPGSEEELLPRNTLLDEKMCDVLEENSIDEVKVRSVITCDTDFGVCAHCYGRDLARGHMVNQGEAVGVIAAQSIGEPGTQLTMRTFHIGGAASRATAENNIQVKNPGTIKLHNAKWVVNSDKAHVITSRSTELTLTDEYGRERERYKVPYGAVLKKGEGDSVDGGETVANWDPHTHPIITEVEGRIKFVDLIDGVTMTRQTDELTGLSSIVVLETGQRTSAGKDMRPMVKLVDGKGNDVNIAGTDIPAQYFLPGNAIINLEDNSEVKIGDTLARIPQEGSKTRDITGGLPRVADLFEARKPKEPAILAEKTGTVSFGKETKGKRRLLITPTDGGDQHEEMIPKWRQLNVFEGEQVTKGEVIADGPEAPHDILRLRGVSAVANYIVNEVQEVYRLQGVKINDKHIETIVRQMLRKALILRAGDTNLLEGEMVEMSEVLAANAKAEADGKKPAIFERQLLGITKASLSTESFISAASFQETTRVLTEAAVGGKKDSLRGLKENVIVGRLIPAGTGYSYHKERMQRRLDELNVDIEPTMTAEQAEQQLADALNAGNSSAGDDSAE.

C70, C72, C85, and C88 together coordinate Zn(2+). Mg(2+) contacts are provided by D460, D462, and D464. Positions 814, 888, 895, and 898 each coordinate Zn(2+).

Belongs to the RNA polymerase beta' chain family. The RNAP catalytic core consists of 2 alpha, 1 beta, 1 beta' and 1 omega subunit. When a sigma factor is associated with the core the holoenzyme is formed, which can initiate transcription. Requires Mg(2+) as cofactor. The cofactor is Zn(2+).

It catalyses the reaction RNA(n) + a ribonucleoside 5'-triphosphate = RNA(n+1) + diphosphate. Functionally, DNA-dependent RNA polymerase catalyzes the transcription of DNA into RNA using the four ribonucleoside triphosphates as substrates. The polypeptide is DNA-directed RNA polymerase subunit beta' (Idiomarina loihiensis (strain ATCC BAA-735 / DSM 15497 / L2-TR)).